We begin with the raw amino-acid sequence, 419 residues long: MKIFVKTLKGTHFEIEVKPEDSVVDVKKNIESVQGADVYPAAKQMLIHQGKVLKDETTIEENKVAENSFIVIMMNKSKPASAAASSASAGTSQAKSIPPSTSQPSISPQTPASVSAPVAPAPTRPPPPAPTPTPAPVAATETVTTPIPEPVPATISSSTPAPDSAPVGSQGDVYGQAASNLAAGSNLESTIQQILDMGGGTWDRETVVLALRAAFNNPERAVEYLYTGIPEQAEVPPVARPPASAGQPANPPAQTQQPAAAPASGPNANPLDLFPQGLPNVGGNPGAGTLDFLRNSQQFQALRAMVQANPQVLQPMLQELGKQNPNLMRLIQDHQADFLRLINEPVEGGGESGNLLGQMAAGMPQPQAIQVTHEEREAIERLEAMGFERALVLEVFFACNKNEELAANYLLDHMHEFEE.

Residues 1–79 (MKIFVKTLKG…IVIMMNKSKP (79 aa)) enclose the Ubiquitin-like domain. The segment covering 83 to 118 (AASSASAGTSQAKSIPPSTSQPSISPQTPASVSAPV) has biased composition (low complexity). Positions 83-172 (AASSASAGTS…DSAPVGSQGD (90 aa)) are disordered. A compositionally biased stretch (pro residues) spans 119–135 (APAPTRPPPPAPTPTPA). Positions 136–146 (PVAATETVTTP) are enriched in low complexity. Positions 185-228 (SNLESTIQQILDMGGGTWDRETVVLALRAAFNNPERAVEYLYTG) constitute a UBA 1 domain. A disordered region spans residues 235-282 (VPPVARPPASAGQPANPPAQTQQPAAAPASGPNANPLDLFPQGLPNVG). Over residues 245 to 270 (AGQPANPPAQTQQPAAAPASGPNANP) the composition is skewed to low complexity. The STI1 domain occupies 288–331 (GTLDFLRNSQQFQALRAMVQANPQVLQPMLQELGKQNPNLMRLI). Positions 372 to 413 (THEEREAIERLEAMGFERALVLEVFFACNKNEELAANYLLDH) constitute a UBA 2 domain.

The protein belongs to the RAD23 family. As to quaternary structure, interacts with 'Lys-48'-linked polyubiquitin chains via its both UBA domains. Interacts with RPN10 via its ubiquitin-like domain. In terms of tissue distribution, widely expressed in the whole plant.

Its subcellular location is the nucleus. It localises to the cytoplasm. Functionally, may be involved in nucleotide excision repair. Binds and presumably selects ubiquitin-conjugates for destruction. Prefers multiubiquitin chains rather than single ubiquitins, with a binding affinity for 'Lys-48'-linked ubiquitin chains. Acts as a ubiquitin receptor that associates with the 26S proteasomal docking subunit RPN10 for the indirect recognition of ubiquitinated substrates of ubiquitin/26S proteasome-mediated proteolysis (UPP). Involved in UV tolerance in hypocotyls, specifically in dark conditions. This is Ubiquitin receptor RAD23c from Arabidopsis thaliana (Mouse-ear cress).